We begin with the raw amino-acid sequence, 130 residues long: Iron-sulfur cluster insertion protein ErpA (130 aa).

Residues cysteine 58, cysteine 122, and cysteine 124 each coordinate iron-sulfur cluster.

The protein belongs to the HesB/IscA family. Homodimer. Iron-sulfur cluster is required as a cofactor.

Required for insertion of 4Fe-4S clusters for at least IspG. The sequence is that of Iron-sulfur cluster insertion protein ErpA from Stenotrophomonas maltophilia (strain K279a).